The sequence spans 164 residues: ATP synthase subunit b (164 aa).

A helical transmembrane segment spans residues 5 to 25 (IGELIGNFILVAGSFLLLIVL).

The protein belongs to the ATPase B chain family. As to quaternary structure, F-type ATPases have 2 components, F(1) - the catalytic core - and F(0) - the membrane proton channel. F(1) has five subunits: alpha(3), beta(3), gamma(1), delta(1), epsilon(1). F(0) has three main subunits: a(1), b(2) and c(10-14). The alpha and beta chains form an alternating ring which encloses part of the gamma chain. F(1) is attached to F(0) by a central stalk formed by the gamma and epsilon chains, while a peripheral stalk is formed by the delta and b chains.

The protein resides in the cell membrane. Its function is as follows. F(1)F(0) ATP synthase produces ATP from ADP in the presence of a proton or sodium gradient. F-type ATPases consist of two structural domains, F(1) containing the extramembraneous catalytic core and F(0) containing the membrane proton channel, linked together by a central stalk and a peripheral stalk. During catalysis, ATP synthesis in the catalytic domain of F(1) is coupled via a rotary mechanism of the central stalk subunits to proton translocation. Functionally, component of the F(0) channel, it forms part of the peripheral stalk, linking F(1) to F(0). This chain is ATP synthase subunit b, found in Streptococcus gordonii (strain Challis / ATCC 35105 / BCRC 15272 / CH1 / DL1 / V288).